The sequence spans 566 residues: MNWAISNLTGGNRVSRAILVRYSSVPLADATNDGSSTAPQTPTASTPRPSSSHSSLSSTFAATFLHASSRHIPGRAVPRQNANGQNGGKGNASGAGGGAGGGGAGGASGGTGGTGAQAAGQLSLPLDVEETVTCFCRKARRKERDGDQNSTDTKLYLEESVLERKLPEADLKALVDLPAGLDYNEWLASHTLALFEHVNLVYGTISEFCTQSGCADMTGPGNRTYLWFDEKGKKTRVAAPQYIDYVMTFTQKTVSDESIFPTKYANEFPGSFESIARKILRLQFHVIAHLYAAHFREIALLGLHTHLNLTFAHLTALHRRFNLIDEKETDVLRDLEVALRLTDDTGGCQDATSTTSSVHDHSHSGDLQHQSLQQQQQHHNSSSNSTSSAEAFHVNSQSNNGSTSASASVSLIDGDAVAPPICTQPEAGAGCKPAGSSGLLGGILGDLTSGEFGDTTRYCTSAVPQAAAAAGAGVGGTAIGATDAAALNNGAGALHLNFSNNNNNNHNLNHHHHHHHHHGHHGHHHAAQQQQQHSGLIQCNAAGGGGNATGVATGGATAAASSTTTA.

Disordered regions lie at residues 28-57 and 74-118; these read ADAT…SSLS and GRAV…GAQA. Residues 35–57 are compositionally biased toward low complexity; that stretch reads SSTAPQTPTASTPRPSSSHSSLS. The span at 85-115 shows a compositional bias: gly residues; sequence QNGGKGNASGAGGGAGGGGAGGASGGTGGTG. Zn(2+) contacts are provided by C209, C214, H289, and H294. 2 disordered regions span residues 346 to 407 and 498 to 541; these read GGCQ…SASA and FSNN…QCNA. The span at 367–388 shows a compositional bias: low complexity; that stretch reads LQHQSLQQQQQHHNSSSNSTSS. Polar residues predominate over residues 394 to 407; sequence VNSQSNNGSTSASA. A compositionally biased stretch (low complexity) spans 498 to 507; that stretch reads FSNNNNNNHN. The segment covering 508 to 526 has biased composition (basic residues); sequence LNHHHHHHHHHGHHGHHHA.

It belongs to the MOB1/phocein family. In terms of assembly, interacts with and activates trc, also interacts with wts.

Its subcellular location is the cytoplasm. The protein localises to the nucleus. In terms of biological role, required for the normal morphogenesis of a variety of polarized outgrowths including epidermal hairs, bristles, arista laterals, and dendrites. The chain is MOB kinase activator-like 2 (Mob2) from Drosophila melanogaster (Fruit fly).